The chain runs to 128 residues: Flagellar basal body rod protein FlgB (128 aa).

The protein belongs to the flagella basal body rod proteins family. The basal body constitutes a major portion of the flagellar organelle and consists of a number of rings mounted on a central rod. In Gram-negative bacteria, at least four rings, L, P, S and M are present, whereas Gram-positive bacteria lack the L and P rings. The rod consists of about 26 subunits of FlgG in the distal portion, and FlgB, FlgC and FlgF build up the proximal portion of the rod with about 6 subunits each. Rod assembly occurs by export via the flagellum-specific pathway of its constituent proteins and by their incorporation into the rod structure in the probable order of FlgB, FlgC, FlgF and FlgG. Another protein, FliE, also assembles onto the stable rod structure.

Its subcellular location is the bacterial flagellum basal body. Its function is as follows. Structural component of flagellum, the bacterial motility apparatus. Part of the rod structure of flagellar basal body. The polypeptide is Flagellar basal body rod protein FlgB (Cereibacter sphaeroides (strain ATCC 17023 / DSM 158 / JCM 6121 / CCUG 31486 / LMG 2827 / NBRC 12203 / NCIMB 8253 / ATH 2.4.1.) (Rhodobacter sphaeroides)).